The following is a 605-amino-acid chain: Protein kinase wis1 (605 aa).

A compositionally biased stretch (polar residues) spans 1 to 20 (MSSPNNQPLSCSLRQLSISP). The segment at 1–141 (MSSPNNQPLS…TPPGPFPGGL (141 aa)) is disordered. Low complexity-rich tracts occupy residues 31 to 73 (GSLL…SSPS) and 90 to 105 (RLGR…SLNL). Basic and acidic residues predominate over residues 106 to 115 (DMKDPSEKPR). A Phosphoserine modification is found at serine 168. Over residues 188 to 200 (SQLAGRLSNSPVK) the composition is skewed to polar residues. The interval 188–263 (SQLAGRLSNS…PSSMASRRGL (76 aa)) is disordered. The segment covering 244–256 (SNSNPTSPVSPSS) has biased composition (low complexity). Serine 253 is modified (phosphoserine). The Protein kinase domain occupies 320 to 579 (IIKLEELGKG…YHELANHPWL (260 aa)). ATP contacts are provided by residues 326-334 (LGKGNYGVV) and lysine 349. Aspartate 441 functions as the Proton acceptor in the catalytic mechanism. Serine 469 carries the phosphoserine modification. Threonine 473 is subject to Phosphothreonine.

Belongs to the protein kinase superfamily. STE Ser/Thr protein kinase family. MAP kinase kinase subfamily. In terms of processing, dephosphorylated by pyp1 and pyp2.

The enzyme catalyses L-seryl-[protein] + ATP = O-phospho-L-seryl-[protein] + ADP + H(+). It carries out the reaction L-threonyl-[protein] + ATP = O-phospho-L-threonyl-[protein] + ADP + H(+). It catalyses the reaction L-tyrosyl-[protein] + ATP = O-phospho-L-tyrosyl-[protein] + ADP + H(+). In terms of biological role, dosage-dependent regulator of mitosis with serine/ threonine protein kinase activity. May play a role in the integration of nutritional sensing with the control over entry into mitosis. It may interact with cdc25, wee1 and win1. May activate sty1. In Schizosaccharomyces pombe (strain 972 / ATCC 24843) (Fission yeast), this protein is Protein kinase wis1 (wis1).